Reading from the N-terminus, the 373-residue chain is Glycerol-3-phosphate dehydrogenase [NAD(+)] 2 (373 aa).

A Phosphoserine modification is found at Ser15. NAD(+) is bound by residues 31–36 (GSGNWG), Phe123, Lys146, and Ala179. Position 146 (Lys146) interacts with substrate. Lys236 functions as the Proton acceptor in the catalytic mechanism. Residues Arg300 and Gln329 each contribute to the NAD(+) site. Substrate is bound at residue 300–301 (RN).

It belongs to the NAD-dependent glycerol-3-phosphate dehydrogenase family.

Its subcellular location is the cytoplasm. The enzyme catalyses sn-glycerol 3-phosphate + NAD(+) = dihydroxyacetone phosphate + NADH + H(+). This Schizosaccharomyces pombe (strain 972 / ATCC 24843) (Fission yeast) protein is Glycerol-3-phosphate dehydrogenase [NAD(+)] 2 (gpd2).